Reading from the N-terminus, the 350-residue chain is DNA polymerase IV (350 aa).

Positions 5–181 (IMHYDMDAFY…KKIKIIPGVG (177 aa)) constitute a UmuC domain. The Mg(2+) site is built by Asp-9 and Asp-99. Glu-100 is an active-site residue.

This sequence belongs to the DNA polymerase type-Y family. In terms of assembly, monomer. It depends on Mg(2+) as a cofactor.

The protein localises to the cytoplasm. It carries out the reaction DNA(n) + a 2'-deoxyribonucleoside 5'-triphosphate = DNA(n+1) + diphosphate. Poorly processive, error-prone DNA polymerase involved in untargeted mutagenesis. Copies undamaged DNA at stalled replication forks, which arise in vivo from mismatched or misaligned primer ends. These misaligned primers can be extended by PolIV. Exhibits no 3'-5' exonuclease (proofreading) activity. May be involved in translesional synthesis, in conjunction with the beta clamp from PolIII. This chain is DNA polymerase IV, found in Fusobacterium nucleatum subsp. nucleatum (strain ATCC 25586 / DSM 15643 / BCRC 10681 / CIP 101130 / JCM 8532 / KCTC 2640 / LMG 13131 / VPI 4355).